Consider the following 912-residue polypeptide: DNA ligase 4 (912 aa).

Residues glutamate 271, threonine 272, lysine 273, leucine 274, arginine 278, glutamate 331, lysine 345, phenylalanine 367, glutamate 427, lysine 432, lysine 449, and lysine 451 each coordinate ATP. Lysine 273 (N6-AMP-lysine intermediate) is an active-site residue. A Mg(2+)-binding site is contributed by glutamate 331. A Mg(2+)-binding site is contributed by glutamate 427. Positions 610 to 620 are required for catalytic activity; that stretch reads LATKHLHVGDD. BRCT domains lie at 654 to 743 and 846 to 912; these read KVSN…PRFM and LRFH…QYLL.

The protein belongs to the ATP-dependent DNA ligase family. Interacts with XRCC4; the LIG4-XRCC4 subcomplex has a 1:2 stoichiometry and XRCC4 is required for LIG4 stability. Component of the core long-range non-homologous end joining (NHEJ) complex (also named DNA-PK complex) composed of PRKDC, LIG4, XRCC4, XRCC6/Ku70, XRCC5/Ku86 and NHEJ1/XLF. Additional component of the NHEJ complex includes PAXX. Following autophosphorylation, PRKDC dissociates from DNA, leading to formation of the short-range NHEJ complex, composed of LIG4, XRCC4, XRCC6/Ku70, XRCC5/Ku86 and NHEJ1/XLF. Interacts with DCLRE1C; the interaction is direct. Interacts with APLF. Requires Mg(2+) as cofactor.

Its subcellular location is the nucleus. The catalysed reaction is ATP + (deoxyribonucleotide)n-3'-hydroxyl + 5'-phospho-(deoxyribonucleotide)m = (deoxyribonucleotide)n+m + AMP + diphosphate.. Its function is as follows. DNA ligase involved in DNA non-homologous end joining (NHEJ); required for double-strand break (DSB) repair and V(D)J recombination. Catalyzes the NHEJ ligation step of the broken DNA during DSB repair by resealing the DNA breaks after the gap filling is completed. Joins single-strand breaks in a double-stranded polydeoxynucleotide in an ATP-dependent reaction. LIG4 is mechanistically flexible: it can ligate nicks as well as compatible DNA overhangs alone, while in the presence of XRCC4, it can ligate ends with 2-nucleotides (nt) microhomology and 1-nt gaps. Forms a subcomplex with XRCC4; the LIG4-XRCC4 subcomplex is responsible for the NHEJ ligation step and XRCC4 enhances the joining activity of LIG4. Binding of the LIG4-XRCC4 complex to DNA ends is dependent on the assembly of the DNA-dependent protein kinase complex DNA-PK to these DNA ends. LIG4 regulates nuclear localization of XRCC4. This chain is DNA ligase 4, found in Cricetulus griseus (Chinese hamster).